Reading from the N-terminus, the 240-residue chain is Seed lectin (240 aa).

The N-linked (GlcNAc...) asparagine glycan is linked to Asn111. Mn(2+) is bound by residues Glu123 and Asp125. Asp125, Asn129, and Asp132 together coordinate Ca(2+). Asp132 and His137 together coordinate Mn(2+). Asn183 carries an N-linked (GlcNAc...) asparagine glycan.

It belongs to the leguminous lectin family. As to quaternary structure, homotetramer. In terms of processing, partially N-glycosylated at Asn-111 and Asn-183 with the heptasaccharide [(beta-xylosyl-1,2)(alpha-mannosyl-1,6)(alpha-mannosyl-1,3)]beta-manosyl-1,4-GlcNAC-beta-1,4-GlcNAc-beta-1,4 [alpha-fucosyl-1,3]GlcNAc. A small proportion of alpha chains are proteolytically cleaved at 114-115 into gamma and beta chains. This is probably dependent on the deglycosylation of Asn-111. Seed.

In terms of biological role, lectin that binds galactose. The polypeptide is Seed lectin (Vatairea macrocarpa).